Reading from the N-terminus, the 169-residue chain is Protein-export protein SecB (169 aa).

The protein belongs to the SecB family. As to quaternary structure, homotetramer, a dimer of dimers. One homotetramer interacts with 1 SecA dimer.

It is found in the cytoplasm. Functionally, one of the proteins required for the normal export of preproteins out of the cell cytoplasm. It is a molecular chaperone that binds to a subset of precursor proteins, maintaining them in a translocation-competent state. It also specifically binds to its receptor SecA. In Alteromonas mediterranea (strain DSM 17117 / CIP 110805 / LMG 28347 / Deep ecotype), this protein is Protein-export protein SecB.